We begin with the raw amino-acid sequence, 586 residues long: Exopolysaccharide phosphotransferase SCO6023 (586 aa).

It belongs to the stealth family.

The polypeptide is Exopolysaccharide phosphotransferase SCO6023 (Streptomyces coelicolor (strain ATCC BAA-471 / A3(2) / M145)).